The chain runs to 325 residues: Natural cytotoxicity triggering receptor 1 (325 aa).

A signal peptide spans 1–16 (MLPTLTALLCLGLCLS). The Extracellular portion of the chain corresponds to 17–258 (QRINTEKQTL…WDHTAQNLIR (242 aa)). Ig-like domains lie at 42–100 (GNSV…TCFY) and 137–192 (GENV…RCFG). Cysteine 49 and cysteine 98 are disulfide-bonded. Asparagine 139 carries N-linked (GlcNAc...) asparagine glycosylation. Cysteine 144 and cysteine 190 are joined by a disulfide. N-linked (GlcNAc...) asparagine glycosylation occurs at asparagine 216. Residues 259 to 279 (IGLACIIVMALVWLLAEDWLS) form a helical membrane-spanning segment. Residues 280–325 (RRKDHEKLNRLTSWECRGRRRMHRYHEEEQRDAISMRELKATPGDM) are Cytoplasmic-facing.

This sequence belongs to the natural cytotoxicity receptor (NCR) family. In terms of assembly, interacts with CD3Z and FCER1G. As to expression, weakly expressed in spleen, heart and lung.

The protein localises to the cell membrane. In terms of biological role, cytotoxicity-activating receptor that may contribute to the increased efficiency of activated natural killer (NK) cells to mediate tumor cell lysis. The chain is Natural cytotoxicity triggering receptor 1 (Ncr1) from Rattus norvegicus (Rat).